Here is a 597-residue protein sequence, read N- to C-terminus: U3 small nucleolar RNA-associated protein 6 homolog (597 aa).

HAT repeat units follow at residues 121–153 (ATKT…WEME), 156–188 (LSSE…MELM), 304–335 (RKEE…FCLE), 488–520 (GGYK…FEKE), and 524–557 (CNMA…EELN).

It belongs to the UTP6 family. In terms of assembly, part of the small subunit (SSU) processome, composed of more than 70 proteins and the RNA chaperone small nucleolar RNA (snoRNA) U3.

It is found in the nucleus. The protein resides in the nucleolus. In terms of biological role, part of the small subunit (SSU) processome, first precursor of the small eukaryotic ribosomal subunit. During the assembly of the SSU processome in the nucleolus, many ribosome biogenesis factors, an RNA chaperone and ribosomal proteins associate with the nascent pre-rRNA and work in concert to generate RNA folding, modifications, rearrangements and cleavage as well as targeted degradation of pre-ribosomal RNA by the RNA exosome. Involved in nucleolar processing of pre-18S ribosomal RNA. In Homo sapiens (Human), this protein is U3 small nucleolar RNA-associated protein 6 homolog.